The chain runs to 243 residues: 23S rRNA (guanosine-2'-O-)-methyltransferase RlmB (243 aa).

Positions 196, 216, and 225 each coordinate S-adenosyl-L-methionine.

It belongs to the class IV-like SAM-binding methyltransferase superfamily. RNA methyltransferase TrmH family. RlmB subfamily. In terms of assembly, homodimer.

It is found in the cytoplasm. The catalysed reaction is guanosine(2251) in 23S rRNA + S-adenosyl-L-methionine = 2'-O-methylguanosine(2251) in 23S rRNA + S-adenosyl-L-homocysteine + H(+). Specifically methylates the ribose of guanosine 2251 in 23S rRNA. This is 23S rRNA (guanosine-2'-O-)-methyltransferase RlmB from Salmonella typhimurium (strain LT2 / SGSC1412 / ATCC 700720).